The primary structure comprises 269 residues: GTP cyclohydrolase FolE2 (269 aa).

Belongs to the GTP cyclohydrolase IV family.

It carries out the reaction GTP + H2O = 7,8-dihydroneopterin 3'-triphosphate + formate + H(+). Its pathway is cofactor biosynthesis; 7,8-dihydroneopterin triphosphate biosynthesis; 7,8-dihydroneopterin triphosphate from GTP: step 1/1. Functionally, converts GTP to 7,8-dihydroneopterin triphosphate. This chain is GTP cyclohydrolase FolE2, found in Burkholderia ambifaria (strain ATCC BAA-244 / DSM 16087 / CCUG 44356 / LMG 19182 / AMMD) (Burkholderia cepacia (strain AMMD)).